Here is a 109-residue protein sequence, read N- to C-terminus: Parvalbumin, thymic (109 aa).

Ala2 carries the post-translational modification N-acetylalanine. EF-hand domains lie at 39–74 (KTPD…FSSS) and 78–109 (LTSA…LVKA). Residues Asp52, Asp54, Ser56, Glu63, Asp91, Asp93, Asp95, Lys97, and Glu102 each coordinate Ca(2+).

This sequence belongs to the parvalbumin family.

Appears to promote immune maturation in bone marrow cells in culture. Binds two calcium ions. The chain is Parvalbumin, thymic from Gallus gallus (Chicken).